A 213-amino-acid polypeptide reads, in one-letter code: 5-oxoprolinase subunit B (213 aa).

It belongs to the PxpB family. In terms of assembly, forms a complex composed of PxpA, PxpB and PxpC.

The enzyme catalyses 5-oxo-L-proline + ATP + 2 H2O = L-glutamate + ADP + phosphate + H(+). Its function is as follows. Catalyzes the cleavage of 5-oxoproline to form L-glutamate coupled to the hydrolysis of ATP to ADP and inorganic phosphate. In Haemophilus influenzae (strain ATCC 51907 / DSM 11121 / KW20 / Rd), this protein is 5-oxoprolinase subunit B.